Here is a 200-residue protein sequence, read N- to C-terminus: NADH-quinone oxidoreductase subunit I (200 aa).

4Fe-4S ferredoxin-type domains follow at residues 73-102 (RLLE…METT) and 112-141 (LNYS…HGGD). The [4Fe-4S] cluster site is built by Cys-82, Cys-85, Cys-88, Cys-92, Cys-121, Cys-124, Cys-127, and Cys-131.

Belongs to the complex I 23 kDa subunit family. NDH-1 is composed of 14 different subunits. Subunits NuoA, H, J, K, L, M, N constitute the membrane sector of the complex. It depends on [4Fe-4S] cluster as a cofactor.

Its subcellular location is the cell inner membrane. The catalysed reaction is a quinone + NADH + 5 H(+)(in) = a quinol + NAD(+) + 4 H(+)(out). NDH-1 shuttles electrons from NADH, via FMN and iron-sulfur (Fe-S) centers, to quinones in the respiratory chain. The immediate electron acceptor for the enzyme in this species is believed to be ubiquinone. Couples the redox reaction to proton translocation (for every two electrons transferred, four hydrogen ions are translocated across the cytoplasmic membrane), and thus conserves the redox energy in a proton gradient. This chain is NADH-quinone oxidoreductase subunit I, found in Campylobacter hominis (strain ATCC BAA-381 / DSM 21671 / CCUG 45161 / LMG 19568 / NCTC 13146 / CH001A).